A 148-amino-acid polypeptide reads, in one-letter code: Deoxyuridine 5'-triphosphate nucleotidohydrolase (148 aa).

Substrate-binding positions include 67–69 (RSG), asparagine 80, 84–86 (TID), and lysine 94.

The protein belongs to the dUTPase family. Requires Mg(2+) as cofactor.

It carries out the reaction dUTP + H2O = dUMP + diphosphate + H(+). It functions in the pathway pyrimidine metabolism; dUMP biosynthesis; dUMP from dCTP (dUTP route): step 2/2. In terms of biological role, this enzyme is involved in nucleotide metabolism: it produces dUMP, the immediate precursor of thymidine nucleotides and it decreases the intracellular concentration of dUTP so that uracil cannot be incorporated into DNA. The polypeptide is Deoxyuridine 5'-triphosphate nucleotidohydrolase (Orientia tsutsugamushi (strain Boryong) (Rickettsia tsutsugamushi)).